Here is an 887-residue protein sequence, read N- to C-terminus: Ubiquitin carboxyl-terminal hydrolase 4 (887 aa).

A Rhodanese domain is found at 202 to 328 (KEDSLLLIDV…WIKNGGEIDK (127 aa)). 2 disordered regions span residues 358-465 (AFPD…PKPP) and 484-505 (QKQN…TLIR). Polar residues predominate over residues 387-402 (TPPNGSSTLGRINSPV). The USP domain occupies 525–885 (VGLENMGNSC…SAYVLFYHRI (361 aa)). Catalysis depends on Cys-534, which acts as the Nucleophile. The active-site Proton acceptor is the His-842.

Belongs to the peptidase C19 family.

It localises to the cytoplasm. It is found in the late endosome membrane. The catalysed reaction is Thiol-dependent hydrolysis of ester, thioester, amide, peptide and isopeptide bonds formed by the C-terminal Gly of ubiquitin (a 76-residue protein attached to proteins as an intracellular targeting signal).. With respect to regulation, RFU1 is an inhibitor of deubiquitination activity. Its function is as follows. Ubiquitin thioesterase that acts at the late endosome/prevacuolar compartment to recover ubiquitin from ubiquitinated membrane proteins en route to the vacuole. Also removes ubiquitin from soluble proteins targeted to proteasomes. Is essential to maintain a normal level of free ubiquitin. Required for promoting coordination of DNA replication and avoids DNA overreplication. This Candida glabrata (strain ATCC 2001 / BCRC 20586 / JCM 3761 / NBRC 0622 / NRRL Y-65 / CBS 138) (Yeast) protein is Ubiquitin carboxyl-terminal hydrolase 4 (DOA4).